The following is a 409-amino-acid chain: Argininosuccinate synthase (409 aa).

ATP is bound by residues 10 to 18 (AYSGGLDTS) and alanine 37. Positions 90 and 95 each coordinate L-citrulline. Position 120 (glycine 120) interacts with ATP. Positions 122, 126, and 127 each coordinate L-aspartate. Residue asparagine 126 coordinates L-citrulline. L-citrulline is bound by residues arginine 130, serine 182, serine 191, glutamate 267, and tyrosine 279.

It belongs to the argininosuccinate synthase family. Type 1 subfamily. Homotetramer.

The protein resides in the cytoplasm. The catalysed reaction is L-citrulline + L-aspartate + ATP = 2-(N(omega)-L-arginino)succinate + AMP + diphosphate + H(+). It functions in the pathway amino-acid biosynthesis; L-arginine biosynthesis; L-arginine from L-ornithine and carbamoyl phosphate: step 2/3. The polypeptide is Argininosuccinate synthase (Aromatoleum aromaticum (strain DSM 19018 / LMG 30748 / EbN1) (Azoarcus sp. (strain EbN1))).